A 438-amino-acid chain; its full sequence is uncharacterized protein (438 aa).

This is an uncharacterized protein from Methanocaldococcus jannaschii (strain ATCC 43067 / DSM 2661 / JAL-1 / JCM 10045 / NBRC 100440) (Methanococcus jannaschii).